The chain runs to 138 residues: Putative pre-16S rRNA nuclease (138 aa).

Belongs to the YqgF nuclease family.

The protein resides in the cytoplasm. In terms of biological role, could be a nuclease involved in processing of the 5'-end of pre-16S rRNA. This is Putative pre-16S rRNA nuclease from Escherichia coli O157:H7.